A 241-amino-acid chain; its full sequence is Carboxy-S-adenosyl-L-methionine synthase (241 aa).

Residues Tyr38, Gly63–Ser65, Asp88–Asn89, Asp116–Ile117, Asn131, and Arg198 contribute to the S-adenosyl-L-methionine site.

This sequence belongs to the class I-like SAM-binding methyltransferase superfamily. Cx-SAM synthase family. As to quaternary structure, homodimer.

It catalyses the reaction prephenate + S-adenosyl-L-methionine = carboxy-S-adenosyl-L-methionine + 3-phenylpyruvate + H2O. In terms of biological role, catalyzes the conversion of S-adenosyl-L-methionine (SAM) to carboxy-S-adenosyl-L-methionine (Cx-SAM). The sequence is that of Carboxy-S-adenosyl-L-methionine synthase from Haemophilus influenzae (strain 86-028NP).